The chain runs to 201 residues: Peptidyl-tRNA hydrolase (201 aa).

Residue Tyr-14 coordinates tRNA. Residue His-19 is the Proton acceptor of the active site. The tRNA site is built by Tyr-64, Asn-66, and Asn-113. The disordered stretch occupies residues 178 to 201; that stretch reads PGPAMNRFNRKPEPPESGGEVAAK.

The protein belongs to the PTH family. As to quaternary structure, monomer.

The protein localises to the cytoplasm. It catalyses the reaction an N-acyl-L-alpha-aminoacyl-tRNA + H2O = an N-acyl-L-amino acid + a tRNA + H(+). Functionally, hydrolyzes ribosome-free peptidyl-tRNAs (with 1 or more amino acids incorporated), which drop off the ribosome during protein synthesis, or as a result of ribosome stalling. Catalyzes the release of premature peptidyl moieties from peptidyl-tRNA molecules trapped in stalled 50S ribosomal subunits, and thus maintains levels of free tRNAs and 50S ribosomes. The chain is Peptidyl-tRNA hydrolase from Koribacter versatilis (strain Ellin345).